We begin with the raw amino-acid sequence, 804 residues long: DNA mismatch repair protein MutS (804 aa).

614–621 (GPNMAGKS) contacts ATP.

The protein belongs to the DNA mismatch repair MutS family.

In terms of biological role, this protein is involved in the repair of mismatches in DNA. It is possible that it carries out the mismatch recognition step. This protein has a weak ATPase activity. The polypeptide is DNA mismatch repair protein MutS (Ehrlichia ruminantium (strain Welgevonden)).